Here is a 423-residue protein sequence, read N- to C-terminus: Exodeoxyribonuclease 7 large subunit (423 aa).

It belongs to the XseA family. Heterooligomer composed of large and small subunits.

It localises to the cytoplasm. The enzyme catalyses Exonucleolytic cleavage in either 5'- to 3'- or 3'- to 5'-direction to yield nucleoside 5'-phosphates.. Functionally, bidirectionally degrades single-stranded DNA into large acid-insoluble oligonucleotides, which are then degraded further into small acid-soluble oligonucleotides. The protein is Exodeoxyribonuclease 7 large subunit of Natranaerobius thermophilus (strain ATCC BAA-1301 / DSM 18059 / JW/NM-WN-LF).